The chain runs to 377 residues: Putative glutamate--cysteine ligase 2 (377 aa).

This sequence belongs to the glutamate--cysteine ligase type 2 family. YbdK subfamily.

The catalysed reaction is L-cysteine + L-glutamate + ATP = gamma-L-glutamyl-L-cysteine + ADP + phosphate + H(+). Its function is as follows. ATP-dependent carboxylate-amine ligase which exhibits weak glutamate--cysteine ligase activity. This is Putative glutamate--cysteine ligase 2 from Chromobacterium violaceum (strain ATCC 12472 / DSM 30191 / JCM 1249 / CCUG 213 / NBRC 12614 / NCIMB 9131 / NCTC 9757 / MK).